The chain runs to 358 residues: Sesquiterpene synthase Agr3 (358 aa).

The Mg(2+) site is built by Asp99, Asn246, Ser250, and Glu254. Residues 99 to 103 carry the DDXXD motif motif; it reads DNISD. The (2E,6E)-farnesyl diphosphate site is built by Arg334 and Tyr335.

It belongs to the terpene synthase family. Mg(2+) is required as a cofactor.

It catalyses the reaction (2E,6E)-farnesyl diphosphate = alpha-muurolene + diphosphate. The catalysed reaction is (2E,6E)-farnesyl diphosphate = gamma-muurolene + diphosphate. It carries out the reaction (2E,6E)-farnesyl diphosphate = delta-cadinene + diphosphate. Functionally, terpene cyclase that catalyzes the cyclization of farnesyl diphosphate (FPP) to various sesquiterpenes, including alpha-muurolene, gamma-muurolene, germacrene, delta-cadinene, delta-cadinol and cubenol. This Cyclocybe aegerita (Black poplar mushroom) protein is Sesquiterpene synthase Agr3.